The primary structure comprises 1195 residues: Error-prone DNA polymerase (1195 aa).

A disordered region spans residues 1163–1195; the sequence is ALNGDRRDTPDAPAQRHRHPRDVRILPPSRDFH.

This sequence belongs to the DNA polymerase type-C family. DnaE2 subfamily.

Its subcellular location is the cytoplasm. The catalysed reaction is DNA(n) + a 2'-deoxyribonucleoside 5'-triphosphate = DNA(n+1) + diphosphate. Functionally, DNA polymerase involved in damage-induced mutagenesis and translesion synthesis (TLS). It is not the major replicative DNA polymerase. The protein is Error-prone DNA polymerase of Rhodopseudomonas palustris (strain ATCC BAA-98 / CGA009).